A 122-amino-acid polypeptide reads, in one-letter code: UPF0102 protein TTE1452 (122 aa).

This sequence belongs to the UPF0102 family.

The protein is UPF0102 protein TTE1452 of Caldanaerobacter subterraneus subsp. tengcongensis (strain DSM 15242 / JCM 11007 / NBRC 100824 / MB4) (Thermoanaerobacter tengcongensis).